Here is a 302-residue protein sequence, read N- to C-terminus: Putative gluconeogenesis factor (302 aa).

This sequence belongs to the gluconeogenesis factor family.

It localises to the cytoplasm. Its function is as follows. Required for morphogenesis under gluconeogenic growth conditions. The polypeptide is Putative gluconeogenesis factor (ybhK) (Salmonella typhi).